Reading from the N-terminus, the 289-residue chain is Energy-coupling factor transporter ATP-binding protein EcfA2 (289 aa).

Residues 7-251 (IILDNVSYTY…IELLTKIEID (245 aa)) form the ABC transporter domain. Residue 44–51 (GTTGSGKS) participates in ATP binding.

Belongs to the ABC transporter superfamily. Energy-coupling factor EcfA family. In terms of assembly, forms a stable energy-coupling factor (ECF) transporter complex composed of 2 membrane-embedded substrate-binding proteins (S component), 2 ATP-binding proteins (A component) and 2 transmembrane proteins (T component).

The protein resides in the cell membrane. ATP-binding (A) component of a common energy-coupling factor (ECF) ABC-transporter complex. Unlike classic ABC transporters this ECF transporter provides the energy necessary to transport a number of different substrates. The chain is Energy-coupling factor transporter ATP-binding protein EcfA2 from Mycoplasma capricolum subsp. capricolum (strain California kid / ATCC 27343 / NCTC 10154).